The primary structure comprises 74 residues: Spore germination protein GerE (74 aa).

In terms of domain architecture, HTH luxR-type spans 5-70 (EFQSKPLLTK…QAVVELLRMG (66 aa)). Residues 29–48 (TKEIASELFISEKTVRNHIS) constitute a DNA-binding region (H-T-H motif).

Involved in the regulation of spore formation. Directs the transcription of several genes that encode structural components of the protein coat that encases the mature spore (CotB, CotC, CotG, CotS, CotV, CotW, CotX, CotY and CotZ). Also controls the cgeAB and cgeCDE operons. This Bacillus subtilis (strain 168) protein is Spore germination protein GerE (gerE).